A 201-amino-acid chain; its full sequence is uncharacterized protein (201 aa).

The span at 64 to 78 (DNEIKEEEESEEEEK) shows a compositional bias: acidic residues. Disordered regions lie at residues 64–114 (DNEI…FKNA) and 182–201 (ILPG…LSKQ). Basic residues predominate over residues 96 to 106 (RNKHGRNRNPR). Residues 189–201 (GNTETVDQGLSKQ) show a composition bias toward polar residues.

This is an uncharacterized protein from Ostreid herpesvirus 1 (isolate France) (OsHV-1).